The chain runs to 226 residues: uncharacterized protein (226 aa).

This sequence to L.innocua lin1255, lin1742 and lin2408.

This is an uncharacterized protein from Listeria innocua serovar 6a (strain ATCC BAA-680 / CLIP 11262).